A 429-amino-acid polypeptide reads, in one-letter code: MYQSPRRLCSALLLRDAPGLRRTLVPGPRRTLAPPVLGSRPKSPQLQAAAASGAARSRPRTVSSMGNGTSRLYSALAKTVNSSAAAQHPEYLVSTDPEHLEPIDPKELLEECRAVLHTRPPRYQRDFVDLRTDCSSSHSPIRVMQWNILAQALGEGKDNFVQCPVEALKWEERKCLILEEILAYQPDILCLQEVDHYFDTFQPLLSRLGYQGTFFPKPWSPCLDVEHNNGPDGCALFFLQNRFKLISSTNIRLTAMTLKTNQVAIAQTLECKESGRQFCIAVTHLKARTGWERFRSAQGCDLLQNLQNITQGAKIPLIVCGDFNAEPTEEVYKHFASSSLNLNSAYKLLSPDGQSEPPYTTWKIRTSGECRHTLDYIWYSRHALSVTSALDLLTEEQIGPNRLPSFHYPSDHLSLVCDFSFNEEPHELF.

The N-terminal 73 residues, 1–73 (MYQSPRRLCS…SMGNGTSRLY (73 aa)), are a transit peptide targeting the mitochondrion. The tract at residues 21–68 (RRTLVPGPRRTLAPPVLGSRPKSPQLQAAAASGAARSRPRTVSSMGNG) is disordered. Glu-193 serves as a coordination point for Mg(2+). Substrate is bound by residues Glu-193, 217–219 (KPW), Asn-261, 284–287 (HLKA), and 322–324 (DFN). The segment at 341-351 (NLNSAYKLLSP) is interaction with PPARG. His-412 contributes to the substrate binding site.

Belongs to the CCR4/nocturin family. Interacts with PPARG. The cofactor is Mg(2+). As to expression, highly expressed in the differentiated adipocyte (at protein level). Ubiquitous.

The protein localises to the cytoplasm. It is found in the nucleus. The protein resides in the perinuclear region. It localises to the mitochondrion. The enzyme catalyses NADP(+) + H2O = phosphate + NAD(+). It carries out the reaction NADPH + H2O = phosphate + NADH. In terms of biological role, phosphatase which catalyzes the conversion of NADP(+) to NAD(+) and of NADPH to NADH. Shows a small preference for NADPH over NADP(+). Represses translation and promotes degradation of target mRNA molecules. Plays an important role in post-transcriptional regulation of metabolic genes under circadian control. Exerts a rhythmic post-transcriptional control of genes necessary for metabolic functions including nutrient absorption, glucose/insulin sensitivity, lipid metabolism, adipogenesis, inflammation and osteogenesis. Plays an important role in favoring adipogenesis over osteoblastogenesis and acts as a key regulator of the adipogenesis/osteogenesis balance. Promotes adipogenesis by facilitating PPARG nuclear translocation which activates its transcriptional activity. Regulates circadian expression of NOS2 in the liver and negatively regulates the circadian expression of IGF1 in the bone. Critical for proper development of early embryos. This Mus musculus (Mouse) protein is Nocturnin.